The following is a 378-amino-acid chain: Apoptosis-inducing factor 1 (378 aa).

Residues 7–25 (NIVVVGAGVFGVSVANHLY) form a helical membrane-spanning segment. Residues 12–16 (GAGVF), Arg51, Lys56, and Asp283 each bind FAD.

It belongs to the FAD-dependent oxidoreductase family. FAD serves as cofactor.

Its subcellular location is the mitochondrion outer membrane. It localises to the nucleus. Functionally, putative FAD-dependent oxidoreductase involved in the resistance to cercosporin and other singlet oxygen-generating photosensitizers. Translocates from mitochondria to the nucleus under apoptotic conditions, where it degrades DNA and induces apoptosis. The chain is Apoptosis-inducing factor 1 (AIF1) from Saccharomyces cerevisiae (strain ATCC 204508 / S288c) (Baker's yeast).